The chain runs to 338 residues: 2,3-dihydroxybenzoate decarboxylase (338 aa).

Residue Cys-251 is part of the active site.

It belongs to the metallo-dependent hydrolases superfamily. As to quaternary structure, homotetramer.

The catalysed reaction is 2,3-dihydroxybenzoate + H(+) = catechol + CO2. It functions in the pathway aromatic compound metabolism; benzoate degradation via hydroxylation. Has an absolute substrate specificity for 2,3-DHBA. This chain is 2,3-dihydroxybenzoate decarboxylase, found in Aspergillus oryzae (strain ATCC 42149 / RIB 40) (Yellow koji mold).